Consider the following 473-residue polypeptide: Probable ribonuclease FAU-1 (473 aa).

It belongs to the FAU-1 family.

In terms of biological role, probable RNase involved in rRNA stability through maturation and/or degradation of precursor rRNAs. Binds to RNA in loop regions with AU-rich sequences. In Hyperthermus butylicus (strain DSM 5456 / JCM 9403 / PLM1-5), this protein is Probable ribonuclease FAU-1.